The chain runs to 702 residues: Methionine--tRNA ligase (702 aa).

Positions 23 to 33 (PYANGPLHLGH) match the 'HIGH' region motif. Zn(2+) is bound by residues cysteine 154, cysteine 157, cysteine 167, and cysteine 170. Residues 341 to 345 (KMSKS) carry the 'KMSKS' region motif. Lysine 344 serves as a coordination point for ATP. The segment at 562–593 (LAPPPASAKQQNASMSNTAPPPTAEEPETTAP) is disordered. Residues 569-578 (AKQQNASMSN) are compositionally biased toward polar residues. One can recognise a tRNA-binding domain in the interval 599–702 (DFAKLDLRIG…SSAQPGMPVR (104 aa)).

This sequence belongs to the class-I aminoacyl-tRNA synthetase family. MetG type 1 subfamily. Homodimer. Zn(2+) is required as a cofactor.

The protein resides in the cytoplasm. The catalysed reaction is tRNA(Met) + L-methionine + ATP = L-methionyl-tRNA(Met) + AMP + diphosphate. Is required not only for elongation of protein synthesis but also for the initiation of all mRNA translation through initiator tRNA(fMet) aminoacylation. This Xylella fastidiosa (strain M12) protein is Methionine--tRNA ligase.